The chain runs to 531 residues: Flavin-containing monooxygenase 3 (531 aa).

Residues 9–13 (GAGVS), glutamate 32, 40–41 (LW), and 61–62 (NS) each bind FAD. NADP(+) is bound by residues 60-61 (TN) and 195-198 (SGCD). Serine 401 bears the Phosphoserine mark. The chain crosses the membrane as a helical span at residues 511–531 (YSHFLRLLAVPVLIALFLVLI).

It belongs to the FMO family. It depends on FAD as a cofactor. As to expression, detected in liver and kidney (at protein level). Expressed in kidney and liver. Weakly expressed in lung. Does not seem to be expressed in brain, adipose tissue, or muscle.

It is found in the microsome membrane. The protein resides in the endoplasmic reticulum membrane. It catalyses the reaction trimethylamine + NADPH + O2 = trimethylamine N-oxide + NADP(+) + H2O. It carries out the reaction N,N-dimethylaniline + NADPH + O2 + H(+) = N,N-dimethylaniline N-oxide + NADP(+) + H2O. The catalysed reaction is hypotaurine + NADPH + O2 + H(+) = taurine + NADP(+) + H2O. The enzyme catalyses (S)-nicotine + NADPH + O2 = trans-(S)-nicotine N(1')-oxide + NADP(+) + H2O. It catalyses the reaction albendazole + NADPH + O2 + H(+) = albendazole S-oxide + NADP(+) + H2O. Essential hepatic enzyme that catalyzes the oxygenation of a wide variety of nitrogen- and sulfur-containing compounds including drugs as well as dietary compounds. Plays an important role in the metabolism of trimethylamine (TMA), via the production of trimethylamine N-oxide (TMAO) metabolite. TMA is generated by the action of gut microbiota using dietary precursors such as choline, choline containing compounds, betaine or L-carnitine. By regulating TMAO concentration, FMO3 directly impacts both platelet responsiveness and rate of thrombus formation. This is Flavin-containing monooxygenase 3 (Fmo3) from Rattus norvegicus (Rat).